The following is a 354-amino-acid chain: DNA polymerase IV (354 aa).

Residues I7 to G188 enclose the UmuC domain. Mg(2+) is bound by residues D11 and D106. The active site involves E107.

It belongs to the DNA polymerase type-Y family. As to quaternary structure, monomer. Mg(2+) serves as cofactor.

Its subcellular location is the cytoplasm. The enzyme catalyses DNA(n) + a 2'-deoxyribonucleoside 5'-triphosphate = DNA(n+1) + diphosphate. Functionally, poorly processive, error-prone DNA polymerase involved in untargeted mutagenesis. Copies undamaged DNA at stalled replication forks, which arise in vivo from mismatched or misaligned primer ends. These misaligned primers can be extended by PolIV. Exhibits no 3'-5' exonuclease (proofreading) activity. May be involved in translesional synthesis, in conjunction with the beta clamp from PolIII. The protein is DNA polymerase IV of Shigella boydii serotype 18 (strain CDC 3083-94 / BS512).